Consider the following 366-residue polypeptide: Carbamoyl phosphate synthase small chain (366 aa).

Residues methionine 1–aspartate 171 are CPSase. 3 residues coordinate L-glutamine: serine 47, glycine 221, and glycine 223. Residues serine 173–lysine 360 form the Glutamine amidotransferase type-1 domain. Residue cysteine 248 is the Nucleophile of the active site. L-glutamine-binding residues include leucine 249, glutamine 252, asparagine 290, glycine 292, and tyrosine 293. Catalysis depends on residues histidine 333 and glutamate 335.

It belongs to the CarA family. Composed of two chains; the small (or glutamine) chain promotes the hydrolysis of glutamine to ammonia, which is used by the large (or ammonia) chain to synthesize carbamoyl phosphate. Tetramer of heterodimers (alpha,beta)4.

The enzyme catalyses hydrogencarbonate + L-glutamine + 2 ATP + H2O = carbamoyl phosphate + L-glutamate + 2 ADP + phosphate + 2 H(+). It carries out the reaction L-glutamine + H2O = L-glutamate + NH4(+). It functions in the pathway amino-acid biosynthesis; L-arginine biosynthesis; carbamoyl phosphate from bicarbonate: step 1/1. Its pathway is pyrimidine metabolism; UMP biosynthesis via de novo pathway; (S)-dihydroorotate from bicarbonate: step 1/3. Functionally, small subunit of the glutamine-dependent carbamoyl phosphate synthetase (CPSase). CPSase catalyzes the formation of carbamoyl phosphate from the ammonia moiety of glutamine, carbonate, and phosphate donated by ATP, constituting the first step of 2 biosynthetic pathways, one leading to arginine and/or urea and the other to pyrimidine nucleotides. The small subunit (glutamine amidotransferase) binds and cleaves glutamine to supply the large subunit with the substrate ammonia. In Staphylococcus aureus (strain COL), this protein is Carbamoyl phosphate synthase small chain.